We begin with the raw amino-acid sequence, 598 residues long: Polypeptide N-acetylgalactosaminyltransferase 17 (598 aa).

Over 1–6 (MASLRR) the chain is Cytoplasmic. Residues 7-27 (VKVLLVLNLIAVAGFVLFLAK) form a helical; Signal-anchor for type II membrane protein membrane-spanning segment. The Lumenal segment spans residues 28-598 (CRPIAVRSGD…QRWTIKNSIK (571 aa)). The N-linked (GlcNAc...) asparagine glycan is linked to asparagine 50. Disulfide bonds link cysteine 142–cysteine 373 and cysteine 364–cysteine 443. The interval 151-262 (LPQISIIFIF…AGWAEPVLSR (112 aa)) is catalytic subdomain A. Positions 192 and 223 each coordinate substrate. Mn(2+)-binding residues include aspartate 246, histidine 248, and histidine 378. The segment at 319 to 381 (PIRTPAMIGC…PCSRVAHIER (63 aa)) is catalytic subdomain B. 2 residues coordinate substrate: arginine 381 and tyrosine 386. Asparagine 461 and asparagine 486 each carry an N-linked (GlcNAc...) asparagine glycan. Residues 465 to 594 (AYGELRNNKA…SCTGQRWTIK (130 aa)) enclose the Ricin B-type lectin domain. Intrachain disulfides connect cysteine 478/cysteine 494, cysteine 526/cysteine 541, and cysteine 568/cysteine 586.

This sequence belongs to the glycosyltransferase 2 family. GalNAc-T subfamily. Mn(2+) serves as cofactor. As to expression, highly expressed in brain and heart. Weakly expressed in kidney, liver, lung and spleen.

The protein resides in the golgi apparatus membrane. It carries out the reaction L-seryl-[protein] + UDP-N-acetyl-alpha-D-galactosamine = a 3-O-[N-acetyl-alpha-D-galactosaminyl]-L-seryl-[protein] + UDP + H(+). It catalyses the reaction L-threonyl-[protein] + UDP-N-acetyl-alpha-D-galactosamine = a 3-O-[N-acetyl-alpha-D-galactosaminyl]-L-threonyl-[protein] + UDP + H(+). It participates in protein modification; protein glycosylation. In terms of biological role, may catalyze the initial reaction in O-linked oligosaccharide biosynthesis, the transfer of an N-acetyl-D-galactosamine residue to a serine or threonine residue on the protein receptor. The polypeptide is Polypeptide N-acetylgalactosaminyltransferase 17 (Homo sapiens (Human)).